The chain runs to 417 residues: Actin-related protein 10 (417 aa).

This sequence belongs to the actin family. As to quaternary structure, subunit of dynactin, a multiprotein complex part of a tripartite complex with dynein and a adapter, such as BICDL1, BICD2 or HOOK3. The dynactin complex is built around ACTR1A/ACTB filament and consists of an actin-related filament composed of a shoulder domain, a pointed end and a barbed end. Its length is defined by its flexible shoulder domain. The soulder is composed of 2 DCTN1 subunits, 4 DCTN2 and 2 DCTN3. The 4 DCNT2 (via N-terminus) bind the ACTR1A filament and act as molecular rulers to determine the length. The pointed end is important for binding dynein-dynactin cargo adapters. Consists of 4 subunits: ACTR10, DCNT4, DCTN5 and DCTN6. The barbed end is composed of a CAPZA1:CAPZB heterodimers, which binds ACTR1A/ACTB filament and dynactin and stabilizes dynactin.

It localises to the cytoplasm. It is found in the cytoskeleton. Functionally, part of the dynactin complex that activates the molecular motor dynein for ultra-processive transport along microtubules. This chain is Actin-related protein 10 (ACTR10), found in Sus scrofa (Pig).